The primary structure comprises 882 residues: Alanine--tRNA ligase (882 aa).

Zn(2+)-binding residues include His570, His574, Cys672, and His676.

It belongs to the class-II aminoacyl-tRNA synthetase family. The cofactor is Zn(2+).

Its subcellular location is the cytoplasm. It catalyses the reaction tRNA(Ala) + L-alanine + ATP = L-alanyl-tRNA(Ala) + AMP + diphosphate. Catalyzes the attachment of alanine to tRNA(Ala) in a two-step reaction: alanine is first activated by ATP to form Ala-AMP and then transferred to the acceptor end of tRNA(Ala). Also edits incorrectly charged Ser-tRNA(Ala) and Gly-tRNA(Ala) via its editing domain. The sequence is that of Alanine--tRNA ligase from Xanthomonas campestris pv. campestris (strain ATCC 33913 / DSM 3586 / NCPPB 528 / LMG 568 / P 25).